We begin with the raw amino-acid sequence, 390 residues long: MLSRKGIIPEEYVLTRLAEDPTEPRYRARERRARFVSKKGNCNVAHKNIREQGRFLQDVFTTLVDLKWPHTLLIFTMSFLCSWLLFAMVWWLIAFAHGDLAPGEGTTVPCVTSIHSFSSAFLFSIEVQVTIGFGGRMVTEECPLAILILIVQNIVGLMINAIMLGCIFMKTSQAHRRAETLIFSKHAVIALRHGRLCFMLRVGDLRKSMIISATIHMQVVRKTTSPEGEVVPLHQVDIPMENGVGGNSIFLVAPLIIYHVIDANSPLYDLGPSDLHHHQDLEIIVILEGVVETTGITTQARTSYLADEILWGHRFVPIVAEEDGRYSVDYSKFGNTIKVPTPLCTAHQLDEDHSLLDALTLASTRGPLRKRSVPVAKAKPRFSISPDSLS.

Over 1–65 (MLSRKGIIPE…LQDVFTTLVD (65 aa)) the chain is Cytoplasmic. ATP-binding residues include Asn48 and Arg50. The chain crosses the membrane as a helical span at residues 66-92 (LKWPHTLLIFTMSFLCSWLLFAMVWWL). The Extracellular segment spans residues 93-116 (IAFAHGDLAPGEGTTVPCVTSIHS). Cys110 and Cys142 form a disulfide bridge. An intramembrane region (discontinuously helical; Pore-forming) is located at residues 117–133 (FSSAFLFSIEVQVTIGF). 2 residues coordinate K(+): Thr130 and Phe133. The Selectivity filter motif lies at 130 to 135 (TIGFGG). At 134–142 (GGRMVTEEC) the chain is on the extracellular side. The helical transmembrane segment at 143 to 171 (PLAILILIVQNIVGLMINAIMLGCIFMKT) threads the bilayer. Residues 172–390 (SQAHRRAETL…RFSISPDSLS (219 aa)) are Cytoplasmic-facing. Arg176 serves as a coordination point for a 1,2-diacyl-sn-glycero-3-phospho-(1D-myo-inositol-4,5-bisphosphate). Tyr330 is an ATP binding site. Thr341 is subject to Phosphothreonine; by MAPK1. Residue Ser385 is modified to Phosphoserine; by MAPK1.

Belongs to the inward rectifier-type potassium channel (TC 1.A.2.1) family. KCNJ11 subfamily. In terms of assembly, homotetramer; the homotetramer binds four ATP molecules (one ATP per subunit). Forms an heterooctamer with ABCC8/SUR1; one KCNJ11 homotetramer interacts with four ABCC8/SUR1 molecules. Interacts with ABCC9/SUR2. Phosphorylation by MAPK1 results in changes in channel gating that destabilize the closed states and reduce the ATP sensitivity.

The protein localises to the membrane. It catalyses the reaction K(+)(in) = K(+)(out). Its activity is regulated as follows. KATP channels are regulated by cytoplasmic ATP/ADP ratios; ATP inhibits the channel by closing the pore, while ADP activates the channel. Activated by phosphatidylinositol 4,5-biphosphate (PtdIns(4,5)P2). Its function is as follows. Inward rectifier potassium channel that forms the pore of ATP-sensitive potassium channels (KATP), regulating potassium permeability as a function of cytoplasmic ATP and ADP concentrations in many different cells. Inward rectifier potassium channels are characterized by a greater tendency to allow potassium to flow into the cell rather than out of it. Their voltage dependence is regulated by the concentration of extracellular potassium; as external potassium is raised, the voltage range of the channel opening shifts to more positive voltages. The inward rectification is mainly due to the blockage of outward current by internal magnesium. Can be blocked by extracellular barium. In pancreatic cells, it forms KATP channels with ABCC8/SUR1. Can form cardiac and smooth muscle-type KATP channels with ABCC9. The chain is ATP-sensitive inward rectifier potassium channel 11 (KCNJ11) from Cavia porcellus (Guinea pig).